Here is a 473-residue protein sequence, read N- to C-terminus: Aspartyl/glutamyl-tRNA(Asn/Gln) amidotransferase subunit B (473 aa).

It belongs to the GatB/GatE family. GatB subfamily. As to quaternary structure, heterotrimer of A, B and C subunits.

The catalysed reaction is L-glutamyl-tRNA(Gln) + L-glutamine + ATP + H2O = L-glutaminyl-tRNA(Gln) + L-glutamate + ADP + phosphate + H(+). It carries out the reaction L-aspartyl-tRNA(Asn) + L-glutamine + ATP + H2O = L-asparaginyl-tRNA(Asn) + L-glutamate + ADP + phosphate + 2 H(+). Functionally, allows the formation of correctly charged Asn-tRNA(Asn) or Gln-tRNA(Gln) through the transamidation of misacylated Asp-tRNA(Asn) or Glu-tRNA(Gln) in organisms which lack either or both of asparaginyl-tRNA or glutaminyl-tRNA synthetases. The reaction takes place in the presence of glutamine and ATP through an activated phospho-Asp-tRNA(Asn) or phospho-Glu-tRNA(Gln). This chain is Aspartyl/glutamyl-tRNA(Asn/Gln) amidotransferase subunit B, found in Francisella tularensis subsp. mediasiatica (strain FSC147).